Reading from the N-terminus, the 335-residue chain is Glyceraldehyde-3-phosphate dehydrogenase 2 (335 aa).

NAD(+) contacts are provided by residues arginine 12 to isoleucine 13, aspartate 35, arginine 79, and serine 121. D-glyceraldehyde 3-phosphate-binding positions include serine 152–threonine 154 and threonine 183. Cysteine 153 serves as the catalytic Nucleophile. Residue asparagine 184 coordinates NAD(+). D-glyceraldehyde 3-phosphate is bound by residues arginine 198, threonine 211 to glycine 212, and arginine 234. Asparagine 316 contacts NAD(+).

This sequence belongs to the glyceraldehyde-3-phosphate dehydrogenase family. In terms of assembly, homotetramer.

It is found in the cytoplasm. It carries out the reaction D-glyceraldehyde 3-phosphate + phosphate + NAD(+) = (2R)-3-phospho-glyceroyl phosphate + NADH + H(+). Its pathway is carbohydrate degradation; glycolysis; pyruvate from D-glyceraldehyde 3-phosphate: step 1/5. Its activity is regulated as follows. Inhibited by pentalenolactone. Functionally, catalyzes the oxidative phosphorylation of glyceraldehyde 3-phosphate (G3P) to 1,3-bisphosphoglycerate (BPG) using the cofactor NAD. The first reaction step involves the formation of a hemiacetal intermediate between G3P and a cysteine residue, and this hemiacetal intermediate is then oxidized to a thioester, with concomitant reduction of NAD to NADH. The reduced NADH is then exchanged with the second NAD, and the thioester is attacked by a nucleophilic inorganic phosphate to produce BPG. The sequence is that of Glyceraldehyde-3-phosphate dehydrogenase 2 (gap2) from Streptomyces avermitilis (strain ATCC 31267 / DSM 46492 / JCM 5070 / NBRC 14893 / NCIMB 12804 / NRRL 8165 / MA-4680).